A 397-amino-acid chain; its full sequence is DnaJ homolog subfamily A member 1 (397 aa).

In terms of domain architecture, J spans 6–68; that stretch reads TYYDVLGVKP…KKRELYDKGG (63 aa). The residue at position 66 (Lys-66) is an N6-acetyllysine. Phosphoserine is present on Ser-83. The segment at 121–205 adopts a CR-type zinc-finger fold; that stretch reads GATRKLALQK…CNGRKIVREK (85 aa). Positions 134, 137, 150, 153, 177, 180, 193, and 196 each coordinate Zn(2+). CXXCXGXG motif repeat units lie at residues 134 to 141, 150 to 157, 177 to 184, and 193 to 200; these read CDKCEGRG, CPNCRGTG, CMECQGHG, and CKSCNGRK. Ser-335 carries the post-translational modification Phosphoserine. The tract at residues 352–397 is disordered; it reads VEETDEMDQVELVDFDPNQERRRHYNGEAYEDDEHHPRGGVQCQTS. Positions 353 to 365 are enriched in acidic residues; that stretch reads EETDEMDQVELVD. Tyr-381 bears the Phosphotyrosine mark. A Cysteine methyl ester modification is found at Cys-394. Cys-394 carries S-farnesyl cysteine lipidation. The propeptide at 395–397 is removed in mature form; sequence QTS.

As to quaternary structure, identified in a complex with HSPA1B and BAX. Interacts with RNF207.

It is found in the membrane. Its subcellular location is the cytoplasm. The protein localises to the microsome. It localises to the mitochondrion. The protein resides in the nucleus. It is found in the perinuclear region. Its function is as follows. Co-chaperone for HSPA8/Hsc70. Plays a role in protein transport into mitochondria via its role as co-chaperone. Functions as co-chaperone for HSPA1B and negatively regulates the translocation of BAX from the cytosol to mitochondria in response to cellular stress, thereby protecting cells against apoptosis. Stimulates ATP hydrolysis, but not the folding of unfolded proteins mediated by HSPA1A (in vitro). Promotes apoptosis in response to cellular stress mediated by exposure to anisomycin or UV. The sequence is that of DnaJ homolog subfamily A member 1 (DNAJA1) from Chlorocebus aethiops (Green monkey).